The sequence spans 387 residues: S-adenosylmethionine synthase (387 aa).

ATP is bound at residue His16. Asp18 is a binding site for Mg(2+). Glu44 is a K(+) binding site. L-methionine-binding residues include Glu57 and Gln100. Positions 100–110 are flexible loop; the sequence is QSPDIAQGVDR. ATP-binding positions include 167–169, 232–233, Asp241, 247–248, Ala264, and Lys268; these read DAK, RF, and RK. An L-methionine-binding site is contributed by Asp241. Lys272 contributes to the L-methionine binding site.

This sequence belongs to the AdoMet synthase family. In terms of assembly, homotetramer; dimer of dimers. Mg(2+) is required as a cofactor. It depends on K(+) as a cofactor.

The protein localises to the cytoplasm. The catalysed reaction is L-methionine + ATP + H2O = S-adenosyl-L-methionine + phosphate + diphosphate. It participates in amino-acid biosynthesis; S-adenosyl-L-methionine biosynthesis; S-adenosyl-L-methionine from L-methionine: step 1/1. Its function is as follows. Catalyzes the formation of S-adenosylmethionine (AdoMet) from methionine and ATP. The overall synthetic reaction is composed of two sequential steps, AdoMet formation and the subsequent tripolyphosphate hydrolysis which occurs prior to release of AdoMet from the enzyme. The protein is S-adenosylmethionine synthase of Cupriavidus pinatubonensis (strain JMP 134 / LMG 1197) (Cupriavidus necator (strain JMP 134)).